The primary structure comprises 487 residues: Glycogen synthase (487 aa).

Position 20 (Lys20) interacts with ADP-alpha-D-glucose.

It belongs to the glycosyltransferase 1 family. Bacterial/plant glycogen synthase subfamily.

It carries out the reaction [(1-&gt;4)-alpha-D-glucosyl](n) + ADP-alpha-D-glucose = [(1-&gt;4)-alpha-D-glucosyl](n+1) + ADP + H(+). Its pathway is glycan biosynthesis; glycogen biosynthesis. Functionally, synthesizes alpha-1,4-glucan chains using ADP-glucose. In Aliivibrio fischeri (strain MJ11) (Vibrio fischeri), this protein is Glycogen synthase.